A 99-amino-acid polypeptide reads, in one-letter code: Putative membrane protein insertion efficiency factor (99 aa).

The protein belongs to the UPF0161 family.

The protein resides in the cell membrane. Functionally, could be involved in insertion of integral membrane proteins into the membrane. The polypeptide is Putative membrane protein insertion efficiency factor (Corynebacterium glutamicum (strain ATCC 13032 / DSM 20300 / JCM 1318 / BCRC 11384 / CCUG 27702 / LMG 3730 / NBRC 12168 / NCIMB 10025 / NRRL B-2784 / 534)).